Reading from the N-terminus, the 752-residue chain is Peptidyl-prolyl cis-trans isomerase G (752 aa).

In terms of domain architecture, PPIase cyclophilin-type spans 11–176; sequence FFDIAINNQP…AEVRILSCGE (166 aa). Over residues 182-193 the composition is skewed to basic residues; that stretch reads KVKKEEKKRHKS. Positions 182–752 are disordered; that stretch reads KVKKEEKKRH…SPGTDEDKSG (571 aa). Residues 194 to 214 are compositionally biased toward low complexity; it reads SSSSSSSDSDSSSDSQSSSDS. The span at 226 to 251 shows a compositional bias: basic residues; it reads RKRKKKHRKNSRKHKKEKKKRKKSKK. Ser-252, Ser-254, Ser-255, Ser-257, and Ser-288 each carry phosphoserine. The span at 290–308 shows a compositional bias: basic and acidic residues; it reads PKADDKERKNREREREREC. Phosphoserine is present on Ser-313. Basic residues predominate over residues 327 to 345; sequence FGRKIKGRGPRRYRTPSRS. Basic and acidic residues-rich tracts occupy residues 346–366 and 377–447; these read RSRD…EMQR and RWIK…DKYN. Ser-354 is modified (phosphoserine). At Thr-356 the chain carries Phosphothreonine. Ser-384 carries the post-translational modification Phosphoserine. Residue Lys-390 forms a Glycyl lysine isopeptide (Lys-Gly) (interchain with G-Cter in SUMO2) linkage. Ser-395, Ser-411, and Ser-413 each carry phosphoserine. Basic residues predominate over residues 448–461; the sequence is KNKVKKRGKSKSRS. 2 stretches are compositionally biased toward basic and acidic residues: residues 462–552 and 577–598; these read KSKE…DLTK and RSHD…QEYR. Residues 599–625 show a composition bias toward basic residues; that stretch reads RRGRSRSRDRRTPGRSRSKDRRRRRRD. Residues 626–682 are compositionally biased toward basic and acidic residues; that stretch reads SRSSEREESQSRNKEKYRSQDSKSSHRKENSEGEKRMYSKSRDHSSSNNNREKKADI. A phosphoserine mark is found at Ser-685 and Ser-688. The span at 685 to 705 shows a compositional bias: polar residues; it reads SPVSKTKQSSQDNEVKSSTLK. Residue Lys-691 forms a Glycyl lysine isopeptide (Lys-Gly) (interchain with G-Cter in SUMO2) linkage. Phosphoserine occurs at positions 694, 742, and 743. Residues 706-752 show a composition bias toward basic and acidic residues; sequence NQEDEKTRSPVEKENQKSKGQENDHVHDKNKKCDHESSPGTDEDKSG. Phosphothreonine is present on Thr-746. Ser-751 carries the post-translational modification Phosphoserine.

In terms of assembly, interacts with CLK1, PNN and with the phosphorylated C-terminal domain of RNA polymerase II.

The protein resides in the nucleus matrix. It localises to the nucleus speckle. It catalyses the reaction [protein]-peptidylproline (omega=180) = [protein]-peptidylproline (omega=0). Its activity is regulated as follows. Inhibited by cyclosporin A (CsA). In terms of biological role, PPIase that catalyzes the cis-trans isomerization of proline imidic peptide bonds in oligopeptides and may therefore assist protein folding. May be implicated in the folding, transport, and assembly of proteins. May play an important role in the regulation of pre-mRNA splicing. This is Peptidyl-prolyl cis-trans isomerase G (Ppig) from Rattus norvegicus (Rat).